Consider the following 172-residue polypeptide: Ribosome maturation factor RimM (172 aa).

Positions 97–170 constitute a PRC barrel domain; it reads ENEFYFHEII…KITIEVMEGL (74 aa).

Belongs to the RimM family. As to quaternary structure, binds ribosomal protein uS19.

It is found in the cytoplasm. In terms of biological role, an accessory protein needed during the final step in the assembly of 30S ribosomal subunit, possibly for assembly of the head region. Essential for efficient processing of 16S rRNA. May be needed both before and after RbfA during the maturation of 16S rRNA. It has affinity for free ribosomal 30S subunits but not for 70S ribosomes. This chain is Ribosome maturation factor RimM, found in Listeria innocua serovar 6a (strain ATCC BAA-680 / CLIP 11262).